We begin with the raw amino-acid sequence, 140 residues long: Holo-[acyl-carrier-protein] synthase (140 aa).

Positions 8 and 57 each coordinate Mg(2+).

Belongs to the P-Pant transferase superfamily. AcpS family. Mg(2+) serves as cofactor.

It is found in the cytoplasm. It catalyses the reaction apo-[ACP] + CoA = holo-[ACP] + adenosine 3',5'-bisphosphate + H(+). Transfers the 4'-phosphopantetheine moiety from coenzyme A to a Ser of acyl-carrier-protein. The protein is Holo-[acyl-carrier-protein] synthase of Beijerinckia indica subsp. indica (strain ATCC 9039 / DSM 1715 / NCIMB 8712).